We begin with the raw amino-acid sequence, 136 residues long: NADH-quinone oxidoreductase subunit A (136 aa).

A run of 3 helical transmembrane segments spans residues 20-40 (LAVYAVLVAAFVAVQLFVAWW), 70-90 (VPFYLVAIFFLIFDMEGAYIL), and 99-119 (LGWAGWLQMSFFIGLLLVGLV).

The protein belongs to the complex I subunit 3 family. NDH-1 is composed of 14 different subunits. Subunits NuoA, H, J, K, L, M, N constitute the membrane sector of the complex.

The protein localises to the cell inner membrane. It catalyses the reaction a quinone + NADH + 5 H(+)(in) = a quinol + NAD(+) + 4 H(+)(out). NDH-1 shuttles electrons from NADH, via FMN and iron-sulfur (Fe-S) centers, to quinones in the respiratory chain. The immediate electron acceptor for the enzyme in this species is believed to be ubiquinone. Couples the redox reaction to proton translocation (for every two electrons transferred, four hydrogen ions are translocated across the cytoplasmic membrane), and thus conserves the redox energy in a proton gradient. This is NADH-quinone oxidoreductase subunit A from Syntrophobacter fumaroxidans (strain DSM 10017 / MPOB).